The sequence spans 561 residues: Fusion glycoprotein F0 (561 aa).

The N-terminal stretch at 1–26 (MRLTPYPIALTTLMIALTTLPETGLG) is a signal peptide. The Extracellular segment spans residues 27 to 495 (IARDALSQVG…SQEATITVGS (469 aa)). Disulfide bonds link Cys-71/Cys-192, Cys-331/Cys-340, Cys-355/Cys-363, Cys-387/Cys-392, and Cys-394/Cys-417. 2 N-linked (GlcNAc...) asparagine; by host glycosylation sites follow: Asn-72 and Asn-80. Residues 110 to 134 (FAGVVVGLAALGVATAAQVTAAVAV) form a fusion peptide region. The stretch at 135–163 (VKANANAAAINKLAASIQSTNAAISDVIS) forms a coiled coil. A glycan (N-linked (GlcNAc...) asparagine; by host) is linked at Asn-359. 3 N-linked (GlcNAc...) asparagine; by host glycosylation sites follow: Asn-434, Asn-440, and Asn-464. Residues 459-484 (QLAQVNKSLASAEEKIAQSSSLAAQA) adopt a coiled-coil conformation. A helical transmembrane segment spans residues 496–516 (VAMLIAVLALIAGCTGIMIAV). Residues 517–561 (QMSRRLEVLRHLTDQSIISNHHYAELNPPPYNHSYESLHPIPQSH) lie on the Cytoplasmic side of the membrane.

This sequence belongs to the paramyxoviruses fusion glycoprotein family. As to quaternary structure, homotrimer of disulfide-linked F1-F2. In terms of processing, the inactive precursor F0 is glycosylated and proteolytically cleaved into F1 and F2 to be functionally active. The cleavage is mediated by cellular proteases during the transport and maturation of the polypeptide.

The protein localises to the virion membrane. Its subcellular location is the host cell membrane. Functionally, class I viral fusion protein. Under the current model, the protein has at least 3 conformational states: pre-fusion native state, pre-hairpin intermediate state, and post-fusion hairpin state. During viral and plasma cell membrane fusion, the heptad repeat (HR) regions assume a trimer-of-hairpins structure, positioning the fusion peptide in close proximity to the C-terminal region of the ectodomain. The formation of this structure appears to drive apposition and subsequent fusion of viral and plasma cell membranes. Directs fusion of viral and cellular membranes leading to delivery of the nucleocapsid into the cytoplasm. This fusion is pH independent and occurs directly at the outer cell membrane. The trimer of F1-F2 (F protein) probably interacts with HN at the virion surface. Upon HN binding to its cellular receptor, the hydrophobic fusion peptide is unmasked and interacts with the cellular membrane, inducing the fusion between cell and virion membranes. Later in infection, F proteins expressed at the plasma membrane of infected cells could mediate fusion with adjacent cells to form syncytia, a cytopathic effect that could lead to tissue necrosis. This is Fusion glycoprotein F0 (F) from Simiiformes (SV41).